We begin with the raw amino-acid sequence, 1017 residues long: Putative calcium-transporting ATPase 13, plasma membrane-type (1017 aa).

The residue at position 1 (Met-1) is an N-acetylmethionine. The Cytoplasmic segment spans residues 1 to 147 (MRRNVSDHAE…NTYTRQPSKG (147 aa)). The interaction with calmodulin stretch occupies residues 20–31 (LLELPKTLSKSN). A helical membrane pass occupies residues 148–168 (LFHFVVEAFKDLTILILLGCA). The Lumenal segment spans residues 169 to 186 (TLSLGFGIKEHGLKEGWY). Residues 187–207 (DGGSIFVAVFLVVAVSAVSNF) form a helical membrane-spanning segment. At 208-336 (RQNRQFDKLS…NEQTPLQSRL (129 aa)) the chain is on the cytoplasmic side. Residues 337 to 356 (DKLTSSIGKVGLLVAFLVLL) traverse the membrane as a helical segment. The Lumenal portion of the chain corresponds to 357 to 393 (VLLIRYFTGTTKDESGNREYNGKTTKSDEIVNAVVKM). The helical transmembrane segment at 394–411 (VAAAVTIIVVAIPEGLPL) threads the bilayer. The Cytoplasmic segment spans residues 412–802 (AVTLTLAYSM…KWGRCVYNNI (391 aa)). The 4-aspartylphosphate intermediate role is filled by Asp-449. Residues Asp-747 and Asp-751 each coordinate Mg(2+). A helical membrane pass occupies residues 803-821 (QKFIQFQLTVNVAALVINF). Over 822-832 (VAAVSAGDVPL) the chain is Lumenal. Residues 833–853 (TAVQLLWVNLIMDTLGALALA) form a helical membrane-spanning segment. The Cytoplasmic segment spans residues 854 to 873 (TEKPTNDLMKKKPIGRVAPL). Residues 874–896 (ITNIMWRNLLAQAFYQISVLLVL) form a helical membrane-spanning segment. Residues 897–905 (QFRGRSIFN) lie on the Lumenal side of the membrane. The chain crosses the membrane as a helical span at residues 906-926 (VTEKVKNTLIFNTFVLCQVFN). Residues 927 to 944 (EFNARSLEKKNVFKGLHK) are Cytoplasmic-facing. The helical transmembrane segment at 945–966 (NRLFIGIIVVTVVLQVVMVEFL) threads the bilayer. Residues 967–976 (KRFADTERLN) lie on the Lumenal side of the membrane. A helical membrane pass occupies residues 977-998 (LGQWGVCIAIAAASWPIGWLVK). Over 999–1002 (SVPV) the chain is Cytoplasmic.

The protein belongs to the cation transport ATPase (P-type) (TC 3.A.3) family. Type IIB subfamily.

It localises to the membrane. It catalyses the reaction Ca(2+)(in) + ATP + H2O = Ca(2+)(out) + ADP + phosphate + H(+). Its activity is regulated as follows. Activated by calmodulin. Its function is as follows. This magnesium-dependent enzyme catalyzes the hydrolysis of ATP coupled with the translocation of calcium from the cytosol out of the cell or into organelles. The protein is Putative calcium-transporting ATPase 13, plasma membrane-type (ACA13) of Arabidopsis thaliana (Mouse-ear cress).